The primary structure comprises 219 residues: Eukaryotic translation initiation factor 3 subunit J (219 aa).

Over residues 22-40 (VDAWDASSEDEVEKVEEEI) the composition is skewed to acidic residues. The disordered stretch occupies residues 22 to 47 (VDAWDASSEDEVEKVEEEIKEPPKPV). Residues 48–100 (VKQLTKKQALQRAIELKEKELKEPQGDFDIYLEEKRKKELQEASDLENSKNLF) are a coiled coil.

The protein belongs to the eIF-3 subunit J family. Component of the eukaryotic translation initiation factor 3 (eIF-3) complex.

The protein resides in the cytoplasm. In terms of biological role, component of the eukaryotic translation initiation factor 3 (eIF-3) complex, which is involved in protein synthesis of a specialized repertoire of mRNAs and, together with other initiation factors, stimulates binding of mRNA and methionyl-tRNAi to the 40S ribosome. The eIF-3 complex specifically targets and initiates translation of a subset of mRNAs involved in cell proliferation. The sequence is that of Eukaryotic translation initiation factor 3 subunit J (eif3J) from Dictyostelium discoideum (Social amoeba).